A 620-amino-acid chain; its full sequence is MKRLGGLALAALGVVFGDIGTSPLYAIRECFHGDYGIAINEANVFGVLSLLVWSLLLIVSLKYLTFIMKADNDGEGGILALTALLIRHCKKNGGSERFFLIAIGLFGAALLYGDGMITPAISVLSALEGVQMVAPAFHDLIIPATVTVLVILFLFQHHGTARVGTLFGPVILLWFVVLGVLGLVEILRYPQILQAFFPWHGIMFLLNNQLHGFMVLGAVFLSVTGAEALYADMGHFGKRPIRLTWAFLVLPALLLNYFGQGALLLDSPADAHHPFYGLVPSWGLIPMVILSTSATIIASQALITGVFSLTQQAIQLGYLPRLTVTHTSAKHMGQIYVPAANWSLMVATISLVIGFGSSSKLAAAYGVAVTATMLISTILFYYVARDLWRWNKSVLNVMIVVFLLVDLAFFGASASKLFHGAWFPLVIAAVMFTVMMTWKQGRGLLLKQLQDRTLTVEEFMSSLALQPPYRTNGQAVYLTANPDLVPLAMLHNLRHNKVLHSEVALFHFSTERVPRVPNNRKVEVVKLGDGFYKVVARYGFLEYPTIRQVLALANHQGLHFKPEAISFFLSREKIVAGVKSKMTIWRKKLFAVMSRNAISATSYYDLPPGQVIEIGLMVQI.

The next 12 helical transmembrane spans lie at 7–27, 44–64, 98–118, 135–155, 166–186, 201–221, 245–265, 278–298, 335–355, 361–381, 394–414, and 417–437; these read LALA…LYAI, VFGV…LKYL, FFLI…GMIT, PAFH…LFLF, LFGP…LVEI, GIMF…AVFL, WAFL…ALLL, LVPS…TIIA, IYVP…VIGF, LAAA…ILFY, VLNV…GASA, and LFHG…VMMT.

This sequence belongs to the HAK/KUP transporter (TC 2.A.72) family.

It is found in the cell inner membrane. It catalyses the reaction K(+)(in) + H(+)(in) = K(+)(out) + H(+)(out). In terms of biological role, transport of potassium into the cell. Likely operates as a K(+):H(+) symporter. The polypeptide is Probable potassium transport system protein Kup (Chlorobium chlorochromatii (strain CaD3)).